The chain runs to 483 residues: MKEFWQTCVSRLEQELPPQQISAWIRPLVPLAYDEAQAVLRVAAPNRFKLDWVRKNFSHQIEALAAEWYQRPVQVQFELPSHSTTPRIPVTPRAAVAPVAPASAAPLAPAAPPVAAAYSAPPEPPAAPAQTSAAVDAANIVYERSRLNTDLTFENFVTGKANQLARAAALQVAENPGTSYNPLFLYGGVGLGKTHLIHAIGNAMVAAGTGVRVRYVHADQYVSDVVKAYQRKAFDDFKRYYHSLDLLLIDDIQFFSGKNRTQEEFFYAFEAMVAQRKQIIITSDTYPKELSGIDSRLISRFDSGLTVAIEPPELEMRVAILLRKAESEGVPMPEEVAFFIAKHLRSNVRELEGALRKVLAYARFHGREALNVDVCKEALKDLLSVSNGQITVENIQKTVADFYKIKVADMYSKRRPANIALPRQVAMYLAKELTQKSLPEIGDLFGGRDHTTVLHAVRKISDARAKQAELNHTLHVLEQTLKG.

The segment at 1–71 (MKEFWQTCVS…EALAAEWYQR (71 aa)) is domain I, interacts with DnaA modulators. The tract at residues 71–145 (RPVQVQFELP…DAANIVYERS (75 aa)) is domain II. The tract at residues 146–362 (RLNTDLTFEN…GALRKVLAYA (217 aa)) is domain III, AAA+ region. ATP-binding residues include Gly190, Gly192, Lys193, and Thr194. The segment at 363–483 (RFHGREALNV…LHVLEQTLKG (121 aa)) is domain IV, binds dsDNA.

The protein belongs to the DnaA family. As to quaternary structure, oligomerizes as a right-handed, spiral filament on DNA at oriC.

The protein localises to the cytoplasm. In terms of biological role, plays an essential role in the initiation and regulation of chromosomal replication. ATP-DnaA binds to the origin of replication (oriC) to initiate formation of the DNA replication initiation complex once per cell cycle. Binds the DnaA box (a 9 base pair repeat at the origin) and separates the double-stranded (ds)DNA. Forms a right-handed helical filament on oriC DNA; dsDNA binds to the exterior of the filament while single-stranded (ss)DNA is stabiized in the filament's interior. The ATP-DnaA-oriC complex binds and stabilizes one strand of the AT-rich DNA unwinding element (DUE), permitting loading of DNA polymerase. After initiation quickly degrades to an ADP-DnaA complex that is not apt for DNA replication. Binds acidic phospholipids. In Bordetella avium (strain 197N), this protein is Chromosomal replication initiator protein DnaA.